The chain runs to 198 residues: Large ribosomal subunit protein uL23c (198 aa).

A chloroplast-targeting transit peptide spans 1–76; that stretch reads MATTAPNLHS…SFGRDLMVAQ (76 aa).

This sequence belongs to the universal ribosomal protein uL23 family. Component of the chloroplast large ribosomal subunit (LSU). Mature 70S chloroplast ribosomes of higher plants consist of a small (30S) and a large (50S) subunit. The 30S small subunit contains 1 molecule of ribosomal RNA (16S rRNA) and 24 different proteins. The 50S large subunit contains 3 rRNA molecules (23S, 5S and 4.5S rRNA) and 33 different proteins.

It localises to the plastid. The protein resides in the chloroplast. Functionally, component of the chloroplast ribosome (chloro-ribosome), a dedicated translation machinery responsible for the synthesis of chloroplast genome-encoded proteins, including proteins of the transcription and translation machinery and components of the photosynthetic apparatus. The chain is Large ribosomal subunit protein uL23c (RPL23) from Spinacia oleracea (Spinach).